Here is a 209-residue protein sequence, read N- to C-terminus: FMN-dependent NADH:quinone oxidoreductase 2 (209 aa).

17-19 (SAS) contacts FMN.

Belongs to the azoreductase type 1 family. As to quaternary structure, homodimer. Requires FMN as cofactor.

The enzyme catalyses 2 a quinone + NADH + H(+) = 2 a 1,4-benzosemiquinone + NAD(+). It catalyses the reaction N,N-dimethyl-1,4-phenylenediamine + anthranilate + 2 NAD(+) = 2-(4-dimethylaminophenyl)diazenylbenzoate + 2 NADH + 2 H(+). In terms of biological role, quinone reductase that provides resistance to thiol-specific stress caused by electrophilic quinones. Its function is as follows. Also exhibits azoreductase activity. Catalyzes the reductive cleavage of the azo bond in aromatic azo compounds to the corresponding amines. The chain is FMN-dependent NADH:quinone oxidoreductase 2 from Lactiplantibacillus plantarum (strain ATCC BAA-793 / NCIMB 8826 / WCFS1) (Lactobacillus plantarum).